A 204-amino-acid polypeptide reads, in one-letter code: Intraflagellar transport protein 27 (204 aa).

GTP contacts are provided by residues 23 to 30 (GEATVGKS), 75 to 79 (DTAGS), and 136 to 139 (NKTD).

This sequence belongs to the small GTPase superfamily. Rab family. In terms of assembly, component of the IFT complex B, the core composed of IFT25, IFT27, IFT46, IFT52, IFT74, IFT81 and IFT88 as well as associated subunits IFT20, IFT57, IFT80 and IFT172. Interacts with IFT25; the interaction is direct.

It is found in the cell projection. The protein resides in the cilium. It localises to the flagellum. Its subcellular location is the cytoplasm. The protein localises to the cytoskeleton. It is found in the flagellum basal body. Its function is as follows. Small GTPase-like component of the intraflagellar transport (IFT) complex B. Forms a subcomplex within the IFT complex B with IFT25. Has very low GTPase activity either because it lacks the conserved catalytic Gln in position 79 or because it requires some GTPase-activating protein (GAP) for GTP turnover. The polypeptide is Intraflagellar transport protein 27 (IFT27) (Chlamydomonas reinhardtii (Chlamydomonas smithii)).